The following is a 366-amino-acid chain: Inhibin alpha chain (366 aa).

Residues 1-18 form the signal peptide; sequence MVLHLLLFLLLTPQGGHS. A propeptide spanning residues 19–61 is cleaved from the precursor; the sequence is CQGLELARELVLAKVRALFLDALGPPAVTREGGDPGVRRLPRR. Residues 62-232 constitute a propeptide, inhibin alpha N-terminal region; the sequence is HALGGFTHRG…PPSGGERARR (171 aa). Residues Asn-146 and Asn-268 are each glycosylated (N-linked (GlcNAc...) asparagine). 3 cysteine pairs are disulfide-bonded: Cys-262-Cys-328, Cys-291-Cys-363, and Cys-295-Cys-365. An N-linked (GlcNAc...) asparagine; partial glycan is attached at Asn-302.

This sequence belongs to the TGF-beta family. As to quaternary structure, dimeric, linked by one or more disulfide bonds. Activin B is a dimer of alpha and beta-B. Inhibin A is a dimer of alpha and beta-A. Inhibin B is a dimer of alpha and beta-B. Interacts with TGFBR3L; this interaction regulates female fertility. Post-translationally, proteolytic processing yields a number of bioactive forms. The 20/23 kDa forms consist solely of the mature alpha chain, the 26/29 kDa forms consist of the most N-terminal propeptide linked through a disulfide bond to the mature alpha chain, the 50/53 kDa forms encompass the entire proprotein. Each type can be furthermore either mono- or diglycosylated, causing the mass difference. Originally found in ovary (granulosa cells) and testis (Sertoli cells), but widely distributed in many tissues including brain and placenta. In adrenal cortex expression is limited to the zona reticularis and the innermost zona fasciculata in the normal gland, extending centripetally into the zona fasciculata in hyperplasia. Also found in adrenocortical tumors. Also expressed in prostate epithelium of benign prostatic hyperplasia, in regions of basal cell hyperplasia and in nonmalignant regions of high grade prostate cancer. Only circulating inhibin B is found in male, whereas circulating inhibins A and B are found in female.

The protein localises to the secreted. In terms of biological role, inhibins and activins inhibit and activate, respectively, the secretion of follitropin by the pituitary gland. Inhibins/activins are involved in regulating a number of diverse functions such as hypothalamic and pituitary hormone secretion, gonadal hormone secretion, germ cell development and maturation, erythroid differentiation, insulin secretion, nerve cell survival, embryonic axial development or bone growth, depending on their subunit composition. Inhibins appear to oppose the functions of activins. Inhibin A is a dimer of alpha/INHA and beta-A/INHBA that functions as a feedback regulator in the hypothalamic-pituitary-gonadal (HPG) axis. Inhibits the secretion of FSH from the anterior pituitary gland by acting on pituitary gonadotrope cells. Antagonizes activin A by binding to the proteoglycan, betaglycan, and forming a stable complex with and, thereby, sequestering type II activin receptors while excluding type I receptor. Functionally, inhibin B is a dimer of alpha and beta-B that plays a crucial role in the regulation of the reproductive system by inhibiting the secretion of follicle-stimulating hormone (FSH) from the anterior pituitary gland. Thereby, maintains reproductive homeostasis in both males and females. Acts as a more potent suppressor of FSH release than inhibin A. Functions as competitive receptor antagonist binding activin type II receptors with high affinity in the presence of the TGF-beta type III coreceptor/TGFBR3L. This is Inhibin alpha chain (INHA) from Homo sapiens (Human).